The following is a 304-amino-acid chain: Aspartate carbamoyltransferase catalytic subunit (304 aa).

Carbamoyl phosphate is bound by residues R49 and T50. K77 contacts L-aspartate. 3 residues coordinate carbamoyl phosphate: R99, H127, and Q130. L-aspartate-binding residues include R160 and R211. The carbamoyl phosphate site is built by A250 and P251. S303 is modified (phosphoserine).

It belongs to the aspartate/ornithine carbamoyltransferase superfamily. ATCase family. In terms of assembly, heterododecamer (2C3:3R2) of six catalytic PyrB chains organized as two trimers (C3), and six regulatory PyrI chains organized as three dimers (R2).

It catalyses the reaction carbamoyl phosphate + L-aspartate = N-carbamoyl-L-aspartate + phosphate + H(+). Its pathway is pyrimidine metabolism; UMP biosynthesis via de novo pathway; (S)-dihydroorotate from bicarbonate: step 2/3. In terms of biological role, catalyzes the condensation of carbamoyl phosphate and aspartate to form carbamoyl aspartate and inorganic phosphate, the committed step in the de novo pyrimidine nucleotide biosynthesis pathway. This is Aspartate carbamoyltransferase catalytic subunit from Bacillus subtilis (strain 168).